Here is a 211-residue protein sequence, read N- to C-terminus: Small ribosomal subunit protein eS1 (211 aa).

The protein belongs to the eukaryotic ribosomal protein eS1 family.

In Methanothrix thermoacetophila (strain DSM 6194 / JCM 14653 / NBRC 101360 / PT) (Methanosaeta thermophila), this protein is Small ribosomal subunit protein eS1.